We begin with the raw amino-acid sequence, 516 residues long: Sodium channel protein Nach (516 aa).

The Cytoplasmic segment spans residues 1–49 (MGHEEELSPEQVDLKVSPLMGSLKRTWNDFCATSSIHGLRYTRDEDTNR). The helical transmembrane segment at 50–70 (IVHFVWLLISLVMFICAVVMA) threads the bilayer. At 71 to 452 (RTFYIDFRSN…LVSNLGSAFS (382 aa)) the chain is on the extracellular side. N-linked (GlcNAc...) asparagine glycans are attached at residues N128, N165, N220, and N348. A helical transmembrane segment spans residues 453-473 (LFVGMSMLSVVEIMYYFSVIL). Residues 474 to 516 (RKNYVLECEARKKMLHKGPKFAWPKANDSHSKHQKSVFIIHKM) are Cytoplasmic-facing.

The protein belongs to the amiloride-sensitive sodium channel (TC 1.A.6) family.

It is found in the membrane. In terms of biological role, part of a complex that plays a role in tracheal liquid clearance. Probable role in sodium transport. This is Sodium channel protein Nach (Nach) from Drosophila ananassae (Fruit fly).